The following is a 1677-amino-acid chain: Pentafunctional AROM polypeptide (1677 aa).

The 3-dehydroquinate synthase stretch occupies residues Met1 to Asp394. Residues Asp50–Asn52, Glu89–Lys92, Gly120–Val122, and Asp125 each bind NAD(+). Residue Arg136 participates in 7-phospho-2-dehydro-3-deoxy-D-arabino-heptonate binding. Position 145 to 146 (Thr145 to Thr146) interacts with NAD(+). Asp152 and Lys158 together coordinate 7-phospho-2-dehydro-3-deoxy-D-arabino-heptonate. NAD(+) is bound at residue Lys167. Asn168 is a 7-phospho-2-dehydro-3-deoxy-D-arabino-heptonate binding site. NAD(+)-binding positions include Tyr185–Thr188 and Asn196. A Zn(2+)-binding site is contributed by Glu200. Residues Glu200–Lys203 and Lys260 contribute to the 7-phospho-2-dehydro-3-deoxy-D-arabino-heptonate site. Catalysis depends on Glu270, which acts as the Proton acceptor; for 3-dehydroquinate synthase activity. 7-phospho-2-dehydro-3-deoxy-D-arabino-heptonate is bound by residues Arg274–Asn278 and His281. His281 contacts Zn(2+). The Proton acceptor; for 3-dehydroquinate synthase activity role is filled by His285. 7-phospho-2-dehydro-3-deoxy-D-arabino-heptonate contacts are provided by His297 and Lys366. Residue His297 coordinates Zn(2+). The tract at residues Val407–Ile858 is EPSP synthase. Residue Cys840 is the For EPSP synthase activity of the active site. The segment at Asn885–Cys1113 is shikimate kinase. Residue Gly892–Thr899 coordinates ATP. Residues Leu1114–Gln1341 form a 3-dehydroquinase region. The active-site Proton acceptor; for 3-dehydroquinate dehydratase activity is His1243. Lys1271 serves as the catalytic Schiff-base intermediate with substrate; for 3-dehydroquinate dehydratase activity. The segment at Ser1354–Val1677 is shikimate dehydrogenase.

In the N-terminal section; belongs to the sugar phosphate cyclases superfamily. Dehydroquinate synthase family. This sequence in the 2nd section; belongs to the EPSP synthase family. It in the 3rd section; belongs to the shikimate kinase family. The protein in the 4th section; belongs to the type-I 3-dehydroquinase family. In the C-terminal section; belongs to the shikimate dehydrogenase family. In terms of assembly, homodimer. Zn(2+) serves as cofactor.

It localises to the cytoplasm. The enzyme catalyses 7-phospho-2-dehydro-3-deoxy-D-arabino-heptonate = 3-dehydroquinate + phosphate. It catalyses the reaction 3-dehydroquinate = 3-dehydroshikimate + H2O. The catalysed reaction is shikimate + NADP(+) = 3-dehydroshikimate + NADPH + H(+). It carries out the reaction shikimate + ATP = 3-phosphoshikimate + ADP + H(+). The enzyme catalyses 3-phosphoshikimate + phosphoenolpyruvate = 5-O-(1-carboxyvinyl)-3-phosphoshikimate + phosphate. It functions in the pathway metabolic intermediate biosynthesis; chorismate biosynthesis; chorismate from D-erythrose 4-phosphate and phosphoenolpyruvate: step 2/7. The protein operates within metabolic intermediate biosynthesis; chorismate biosynthesis; chorismate from D-erythrose 4-phosphate and phosphoenolpyruvate: step 3/7. Its pathway is metabolic intermediate biosynthesis; chorismate biosynthesis; chorismate from D-erythrose 4-phosphate and phosphoenolpyruvate: step 4/7. It participates in metabolic intermediate biosynthesis; chorismate biosynthesis; chorismate from D-erythrose 4-phosphate and phosphoenolpyruvate: step 5/7. It functions in the pathway metabolic intermediate biosynthesis; chorismate biosynthesis; chorismate from D-erythrose 4-phosphate and phosphoenolpyruvate: step 6/7. Functionally, the AROM polypeptide catalyzes 5 consecutive enzymatic reactions in prechorismate polyaromatic amino acid biosynthesis. This is Pentafunctional AROM polypeptide from Coprinopsis cinerea (strain Okayama-7 / 130 / ATCC MYA-4618 / FGSC 9003) (Inky cap fungus).